Reading from the N-terminus, the 114-residue chain is Putative cysteine proteinase inhibitor 9 (114 aa).

The first 23 residues, 1–23, serve as a signal peptide directing secretion; sequence MRTSSLVLFAAVAVFGAACTAAA.

This sequence belongs to the cystatin family. Phytocystatin subfamily.

The protein resides in the secreted. Functionally, specific inhibitor of cysteine proteinases. Probably involved in the regulation of endogenous processes and in defense against pests and pathogens. In Oryza sativa subsp. japonica (Rice), this protein is Putative cysteine proteinase inhibitor 9.